The chain runs to 205 residues: Adenylyl-sulfate kinase (205 aa).

31–38 (GLSGAGKS) is a binding site for ATP. The active-site Phosphoserine intermediate is the Ser105.

Belongs to the APS kinase family.

The catalysed reaction is adenosine 5'-phosphosulfate + ATP = 3'-phosphoadenylyl sulfate + ADP + H(+). The protein operates within sulfur metabolism; hydrogen sulfide biosynthesis; sulfite from sulfate: step 2/3. Functionally, catalyzes the synthesis of activated sulfate. This Shewanella sp. (strain MR-7) protein is Adenylyl-sulfate kinase.